Here is a 129-residue protein sequence, read N- to C-terminus: Small ribosomal subunit protein uS9 (129 aa).

Belongs to the universal ribosomal protein uS9 family.

This Wolinella succinogenes (strain ATCC 29543 / DSM 1740 / CCUG 13145 / JCM 31913 / LMG 7466 / NCTC 11488 / FDC 602W) (Vibrio succinogenes) protein is Small ribosomal subunit protein uS9.